A 309-amino-acid chain; its full sequence is Phytoene synthase (309 aa).

Belongs to the phytoene/squalene synthase family. It depends on ATP as a cofactor. Mn(2+) is required as a cofactor. Mg(2+) serves as cofactor.

It functions in the pathway carotenoid biosynthesis; phytoene biosynthesis. In terms of biological role, involved in the biosynthesis of carotenoids. Catalyzes the condensation of two molecules of geranylgeranyl diphosphate (GGPP) to give prephytoene diphosphate (PPPP) and the subsequent rearrangement of the cyclopropylcarbinyl intermediate to yield phytoene. In Pseudescherichia vulneris (Escherichia vulneris), this protein is Phytoene synthase (crtB).